Consider the following 152-residue polypeptide: Nucleoside diphosphate kinase (152 aa).

Positions 11, 59, 87, 93, 104, and 114 each coordinate ATP. His117 functions as the Pros-phosphohistidine intermediate in the catalytic mechanism.

This sequence belongs to the NDK family. In terms of assembly, homotetramer. Requires Mg(2+) as cofactor.

Its subcellular location is the cytoplasm. It carries out the reaction a 2'-deoxyribonucleoside 5'-diphosphate + ATP = a 2'-deoxyribonucleoside 5'-triphosphate + ADP. The enzyme catalyses a ribonucleoside 5'-diphosphate + ATP = a ribonucleoside 5'-triphosphate + ADP. In terms of biological role, major role in the synthesis of nucleoside triphosphates other than ATP. The ATP gamma phosphate is transferred to the NDP beta phosphate via a ping-pong mechanism, using a phosphorylated active-site intermediate. The sequence is that of Nucleoside diphosphate kinase from Prochlorococcus marinus (strain MIT 9312).